Reading from the N-terminus, the 208-residue chain is 7-carboxy-7-deazaguanine synthase (208 aa).

Residues 23-25 (LQG) and R38 each bind substrate. A Radical SAM core domain is found at 29–208 (WAGGNAFFIR…LQTHKYLGVR (180 aa)). [4Fe-4S] cluster is bound by residues C42, C46, and C49. T83 serves as a coordination point for substrate. S-adenosyl-L-methionine-binding positions include G85 and 126–128 (SPK).

Belongs to the radical SAM superfamily. 7-carboxy-7-deazaguanine synthase family. Homodimer. It depends on [4Fe-4S] cluster as a cofactor. The cofactor is S-adenosyl-L-methionine. Requires Mg(2+) as cofactor.

The enzyme catalyses 6-carboxy-5,6,7,8-tetrahydropterin + H(+) = 7-carboxy-7-deazaguanine + NH4(+). The protein operates within purine metabolism; 7-cyano-7-deazaguanine biosynthesis. In terms of biological role, catalyzes the complex heterocyclic radical-mediated conversion of 6-carboxy-5,6,7,8-tetrahydropterin (CPH4) to 7-carboxy-7-deazaguanine (CDG), a step common to the biosynthetic pathways of all 7-deazapurine-containing compounds. The sequence is that of 7-carboxy-7-deazaguanine synthase from Synechocystis sp. (strain ATCC 27184 / PCC 6803 / Kazusa).